The chain runs to 319 residues: Beta-ketoacyl-[acyl-carrier-protein] synthase III (319 aa).

Residues Cys-113 and His-246 contribute to the active site. Positions 247–251 (QANIR) are ACP-binding. Residue Asn-276 is part of the active site.

It belongs to the thiolase-like superfamily. FabH family. Homodimer.

It localises to the cytoplasm. It carries out the reaction malonyl-[ACP] + acetyl-CoA + H(+) = 3-oxobutanoyl-[ACP] + CO2 + CoA. Its pathway is lipid metabolism; fatty acid biosynthesis. In terms of biological role, catalyzes the condensation reaction of fatty acid synthesis by the addition to an acyl acceptor of two carbons from malonyl-ACP. Catalyzes the first condensation reaction which initiates fatty acid synthesis and may therefore play a role in governing the total rate of fatty acid production. Possesses both acetoacetyl-ACP synthase and acetyl transacylase activities. Its substrate specificity determines the biosynthesis of branched-chain and/or straight-chain of fatty acids. The protein is Beta-ketoacyl-[acyl-carrier-protein] synthase III of Ehrlichia ruminantium (strain Gardel).